Here is a 245-residue protein sequence, read N- to C-terminus: 1-(5-phosphoribosyl)-5-[(5-phosphoribosylamino)methylideneamino] imidazole-4-carboxamide isomerase (245 aa).

Residue aspartate 7 is the Proton acceptor of the active site. Aspartate 129 functions as the Proton donor in the catalytic mechanism.

The protein belongs to the HisA/HisF family.

It is found in the cytoplasm. It catalyses the reaction 1-(5-phospho-beta-D-ribosyl)-5-[(5-phospho-beta-D-ribosylamino)methylideneamino]imidazole-4-carboxamide = 5-[(5-phospho-1-deoxy-D-ribulos-1-ylimino)methylamino]-1-(5-phospho-beta-D-ribosyl)imidazole-4-carboxamide. It participates in amino-acid biosynthesis; L-histidine biosynthesis; L-histidine from 5-phospho-alpha-D-ribose 1-diphosphate: step 4/9. The sequence is that of 1-(5-phosphoribosyl)-5-[(5-phosphoribosylamino)methylideneamino] imidazole-4-carboxamide isomerase from Escherichia coli (strain 55989 / EAEC).